A 225-amino-acid polypeptide reads, in one-letter code: Chromosome partition protein MukE (225 aa).

The segment at 197–225 (RDGEAMPIENHLQLNDETEESQPDSGEEE) is disordered. Residues 212-225 (DETEESQPDSGEEE) are compositionally biased toward acidic residues.

This sequence belongs to the MukE family. Interacts, and probably forms a ternary complex, with MukF and MukB. The complex formation is stimulated by calcium or magnesium.

It localises to the cytoplasm. Its subcellular location is the nucleoid. In terms of biological role, involved in chromosome condensation, segregation and cell cycle progression. May participate in facilitating chromosome segregation by condensation DNA from both sides of a centrally located replisome during cell division. Probably acts via its interaction with MukB and MukF. The sequence is that of Chromosome partition protein MukE from Salmonella typhi.